Reading from the N-terminus, the 147-residue chain is Lysozyme C-1 (147 aa).

A signal peptide spans 1–18; that stretch reads MKALLTLVFCLLPLAAQG. Residues 19 to 147 enclose the C-type lysozyme domain; sequence KVYSRCELAA…VSKWIRGCRL (129 aa). Disulfide bonds link C24–C145, C48–C133, C82–C98, and C94–C112. Residues E53 and D70 contribute to the active site.

It belongs to the glycosyl hydrolase 22 family.

It localises to the secreted. The catalysed reaction is Hydrolysis of (1-&gt;4)-beta-linkages between N-acetylmuramic acid and N-acetyl-D-glucosamine residues in a peptidoglycan and between N-acetyl-D-glucosamine residues in chitodextrins.. Lysozymes have primarily a bacteriolytic function; those in tissues and body fluids are associated with the monocyte-macrophage system and enhance the activity of immunoagents. The polypeptide is Lysozyme C-1 (Anas platyrhynchos (Mallard)).